Reading from the N-terminus, the 264-residue chain is Triosephosphate isomerase (264 aa).

Asparagine 13–lysine 15 contacts substrate. Histidine 106 (electrophile) is an active-site residue. The Proton acceptor role is filled by glutamate 179. Substrate is bound by residues glycine 185, serine 223, and glycine 244–glycine 245.

Belongs to the triosephosphate isomerase family. As to quaternary structure, homodimer.

Its subcellular location is the cytoplasm. The enzyme catalyses D-glyceraldehyde 3-phosphate = dihydroxyacetone phosphate. The protein operates within carbohydrate biosynthesis; gluconeogenesis. Its pathway is carbohydrate degradation; glycolysis; D-glyceraldehyde 3-phosphate from glycerone phosphate: step 1/1. Involved in the gluconeogenesis. Catalyzes stereospecifically the conversion of dihydroxyacetone phosphate (DHAP) to D-glyceraldehyde-3-phosphate (G3P). In Acinetobacter baumannii (strain SDF), this protein is Triosephosphate isomerase.